A 261-amino-acid chain; its full sequence is Imidazole glycerol phosphate synthase subunit HisF (261 aa).

Catalysis depends on residues aspartate 16 and aspartate 135.

Belongs to the HisA/HisF family. In terms of assembly, heterodimer of HisH and HisF.

The protein localises to the cytoplasm. The catalysed reaction is 5-[(5-phospho-1-deoxy-D-ribulos-1-ylimino)methylamino]-1-(5-phospho-beta-D-ribosyl)imidazole-4-carboxamide + L-glutamine = D-erythro-1-(imidazol-4-yl)glycerol 3-phosphate + 5-amino-1-(5-phospho-beta-D-ribosyl)imidazole-4-carboxamide + L-glutamate + H(+). It participates in amino-acid biosynthesis; L-histidine biosynthesis; L-histidine from 5-phospho-alpha-D-ribose 1-diphosphate: step 5/9. Its function is as follows. IGPS catalyzes the conversion of PRFAR and glutamine to IGP, AICAR and glutamate. The HisF subunit catalyzes the cyclization activity that produces IGP and AICAR from PRFAR using the ammonia provided by the HisH subunit. The polypeptide is Imidazole glycerol phosphate synthase subunit HisF (Mycolicibacterium smegmatis (strain ATCC 700084 / mc(2)155) (Mycobacterium smegmatis)).